We begin with the raw amino-acid sequence, 282 residues long: MASLQRKGLQARILTSEEEEKLKRDQTLVSDFKQQKLEQEAQKNWDLFYKRNSTNFFKDRHWTTREFEELRSCREFEDQKLTMLEAGRGVGNCLFPLLEEDPNIFAYACDFSPRAVEYVKQNPLYDTERCKVFQCDLTKDDLLDHVPPESVDVVMLIFVLSAVHPDKMHLVLQNIYKVLKPGKSVLFRDYGLYDHAMLRFKAGSKLGENFYVRQDGTRSYFFTDEFLAQLFMDTGYEEVVNEYVFRETVNKKEGLCVPRVFLQSKFLKPPKNPSPVVPGPGS.

W45, Y49, G87, D110, D136, L137, and I157 together coordinate S-adenosyl-L-methionine.

It belongs to the methyltransferase superfamily. METL family. Monomer. Interacts with SARS1/SerRS; interaction is mediated via tRNA(Ser) and is required for N(3)-methylcytidine methylation.

The protein resides in the cytoplasm. Its subcellular location is the nucleus. It catalyses the reaction cytidine(32) in tRNA(Ser) + S-adenosyl-L-methionine = N(3)-methylcytidine(32) in tRNA(Ser) + S-adenosyl-L-homocysteine + H(+). Its function is as follows. S-adenosyl-L-methionine-dependent methyltransferase that mediates N(3)-methylcytidine modification of residue 32 of the tRNA anticodon loop of tRNA(Ser), including tRNA(Ser)(UGA) and tRNA(Ser)(GCU). Interaction with SARS1/SerRS is required for N(3)-methylcytidine methylation. This chain is tRNA N(3)-cytidine methyltransferase METTL6 (METTL6), found in Pongo abelii (Sumatran orangutan).